The primary structure comprises 511 residues: Cytochrome P450 monooxyhenase eriC (511 aa).

The chain crosses the membrane as a helical span at residues 2–22; it reads VLADFISIPTVSIACLAVLGI. Cys-445 lines the heme pocket.

Belongs to the cytochrome P450 family. Heme is required as a cofactor.

It is found in the membrane. It catalyses the reaction erinacol + reduced [NADPH--hemoprotein reductase] + O2 = cyathadiol + oxidized [NADPH--hemoprotein reductase] + H2O + H(+). The protein operates within secondary metabolite biosynthesis. Functionally, cytochrome P450 monooxygenase; part of the gene cluster that mediates the biosynthesis of erinacines, cyathane-xylosides that show unique biological activities, including leishmanicidal activity, stimulating activity for nerve growth-factor synthesis, and agonistic activity toward the kappa opioid receptor. Within the pathway, eriC hydroxylates erinacol at C-15 of the seven-membered ring to yield cyathadiol. The first step of the erinacines biosynthesis pathway is catalyzed by the geranylgeranyl diphosphate (GGPP) synthase eriE via conversion of farnesyl pyrophosphate and isopentyl pyrophosphate into geranylgeranyl pyrophosphate (GGPP). GGPP is then substrate of the diterpene cyclase eriG for the production of cyatha-3,12-diene. The cytochrome P450 monooxygenase eriI then hydroxylates cyatha-3,12-diene at C-14 of the seven-membered ring to produce erinacol, which is further hydroxylated at C-15 by the cytochrome P450 monooxygenase eriC to yield cyathadiol. The cytochrome P450 monooxygenase eriA then catalyzes C-11 hydroxylation in the presence of the short chain dehydrogenase/reductase (SDR) eriH, which leads to the production of cyathatriol. The acetyltransferase eriL converts cyathatriol into 11-O-acetyl-cyathatriol. The SDR eriH catalyzes further oxidation of 11-O-acetyl-cyathatriol into 1-O-acetylcyathin A3. Finally, the glycosyl transferase eriJ tranfers xylose from UDP-xylose onto C-14 of 11-O-acetyl-cyathatriol to form eracine Q. EriJ is also able to convert 11-O-acetyl-cyathatriol to eracine Q2 by using UDP-D-glucose as cosubstrate, but at a lower rate. The polypeptide is Cytochrome P450 monooxyhenase eriC (Hericium erinaceus (Lion's mane mushroom)).